A 955-amino-acid polypeptide reads, in one-letter code: Leucine--tRNA ligase (955 aa).

A 'HIGH' region motif is present at residues 51-61 (PYLNGVLHAGH). The 'KMSKS' region motif lies at 647–651 (KLSKS). ATP is bound at residue lysine 650.

It belongs to the class-I aminoacyl-tRNA synthetase family.

It localises to the cytoplasm. It carries out the reaction tRNA(Leu) + L-leucine + ATP = L-leucyl-tRNA(Leu) + AMP + diphosphate. This is Leucine--tRNA ligase from Methanococcus maripaludis (strain DSM 14266 / JCM 13030 / NBRC 101832 / S2 / LL).